Reading from the N-terminus, the 423-residue chain is Serine--tRNA ligase (423 aa).

229-231 (TAE) contributes to the L-serine binding site. 260-262 (RRE) lines the ATP pocket. E283 is an L-serine binding site. 347 to 350 (EISS) serves as a coordination point for ATP. Residue S383 coordinates L-serine.

This sequence belongs to the class-II aminoacyl-tRNA synthetase family. Type-1 seryl-tRNA synthetase subfamily. Homodimer. The tRNA molecule binds across the dimer.

The protein localises to the cytoplasm. It carries out the reaction tRNA(Ser) + L-serine + ATP = L-seryl-tRNA(Ser) + AMP + diphosphate + H(+). The catalysed reaction is tRNA(Sec) + L-serine + ATP = L-seryl-tRNA(Sec) + AMP + diphosphate + H(+). It functions in the pathway aminoacyl-tRNA biosynthesis; selenocysteinyl-tRNA(Sec) biosynthesis; L-seryl-tRNA(Sec) from L-serine and tRNA(Sec): step 1/1. Functionally, catalyzes the attachment of serine to tRNA(Ser). Is also able to aminoacylate tRNA(Sec) with serine, to form the misacylated tRNA L-seryl-tRNA(Sec), which will be further converted into selenocysteinyl-tRNA(Sec). This Trichlorobacter lovleyi (strain ATCC BAA-1151 / DSM 17278 / SZ) (Geobacter lovleyi) protein is Serine--tRNA ligase.